A 20-amino-acid chain; its full sequence is Cytochrome c oxidase subunit 7B-heart, mitochondrial (20 aa).

This sequence belongs to the cytochrome c oxidase VIIb family. Component of the cytochrome c oxidase (complex IV, CIV), a multisubunit enzyme composed of 14 subunits. The complex is composed of a catalytic core of 3 subunits MT-CO1, MT-CO2 and MT-CO3, encoded in the mitochondrial DNA, and 11 supernumerary subunits COX4I, COX5A, COX5B, COX6A, COX6B, COX6C, COX7A, COX7B, COX7C, COX8 and NDUFA4, which are encoded in the nuclear genome. The complex exists as a monomer or a dimer and forms supercomplexes (SCs) in the inner mitochondrial membrane with NADH-ubiquinone oxidoreductase (complex I, CI) and ubiquinol-cytochrome c oxidoreductase (cytochrome b-c1 complex, complex III, CIII), resulting in different assemblies (supercomplex SCI(1)III(2)IV(1) and megacomplex MCI(2)III(2)IV(2)).

The protein localises to the mitochondrion inner membrane. The catalysed reaction is 4 Fe(II)-[cytochrome c] + O2 + 8 H(+)(in) = 4 Fe(III)-[cytochrome c] + 2 H2O + 4 H(+)(out). It participates in energy metabolism; oxidative phosphorylation. Component of the cytochrome c oxidase, the last enzyme in the mitochondrial electron transport chain which drives oxidative phosphorylation. The respiratory chain contains 3 multisubunit complexes succinate dehydrogenase (complex II, CII), ubiquinol-cytochrome c oxidoreductase (cytochrome b-c1 complex, complex III, CIII) and cytochrome c oxidase (complex IV, CIV), that cooperate to transfer electrons derived from NADH and succinate to molecular oxygen, creating an electrochemical gradient over the inner membrane that drives transmembrane transport and the ATP synthase. Cytochrome c oxidase is the component of the respiratory chain that catalyzes the reduction of oxygen to water. Electrons originating from reduced cytochrome c in the intermembrane space (IMS) are transferred via the dinuclear copper A center (CU(A)) of subunit 2 and heme A of subunit 1 to the active site in subunit 1, a binuclear center (BNC) formed by heme A3 and copper B (CU(B)). The BNC reduces molecular oxygen to 2 water molecules using 4 electrons from cytochrome c in the IMS and 4 protons from the mitochondrial matrix. This chain is Cytochrome c oxidase subunit 7B-heart, mitochondrial, found in Thunnus obesus (Bigeye tuna).